Reading from the N-terminus, the 194-residue chain is Small ribosomal subunit protein uS4c (194 aa).

Positions 13-36 are disordered; sequence GLTSKRPRSGSDPKNQLRSGKKSQ. The 62-residue stretch at 82 to 143 folds into the S4 RNA-binding domain; sequence MRLDNILFRL…KQRSKALIQN (62 aa).

Belongs to the universal ribosomal protein uS4 family. Part of the 30S ribosomal subunit. Contacts protein S5. The interaction surface between S4 and S5 is involved in control of translational fidelity.

It localises to the plastid. The protein resides in the chloroplast. In terms of biological role, one of the primary rRNA binding proteins, it binds directly to 16S rRNA where it nucleates assembly of the body of the 30S subunit. Its function is as follows. With S5 and S12 plays an important role in translational accuracy. The chain is Small ribosomal subunit protein uS4c (rps4) from Moraea spathulata (Large yellow moraea).